The following is a 442-amino-acid chain: tRNA-2-methylthio-N(6)-dimethylallyladenosine synthase (442 aa).

The MTTase N-terminal domain occupies 5 to 122 (KKVFIKTLGC…LPEMIKRKQS (118 aa)). [4Fe-4S] cluster-binding residues include Cys-14, Cys-51, Cys-85, Cys-159, Cys-163, and Cys-166. A Radical SAM core domain is found at 145–378 (KAEGAKAYVS…DLLNSNAQII (234 aa)). The TRAM domain occupies 380 to 442 (RQMVGTEQRI…LPNSLRGELI (63 aa)).

It belongs to the methylthiotransferase family. MiaB subfamily. In terms of assembly, monomer. [4Fe-4S] cluster serves as cofactor.

Its subcellular location is the cytoplasm. The catalysed reaction is N(6)-dimethylallyladenosine(37) in tRNA + (sulfur carrier)-SH + AH2 + 2 S-adenosyl-L-methionine = 2-methylsulfanyl-N(6)-dimethylallyladenosine(37) in tRNA + (sulfur carrier)-H + 5'-deoxyadenosine + L-methionine + A + S-adenosyl-L-homocysteine + 2 H(+). Catalyzes the methylthiolation of N6-(dimethylallyl)adenosine (i(6)A), leading to the formation of 2-methylthio-N6-(dimethylallyl)adenosine (ms(2)i(6)A) at position 37 in tRNAs that read codons beginning with uridine. The chain is tRNA-2-methylthio-N(6)-dimethylallyladenosine synthase from Francisella philomiragia subsp. philomiragia (strain ATCC 25017 / CCUG 19701 / FSC 153 / O#319-036).